The primary structure comprises 199 residues: Dephospho-CoA kinase (199 aa).

The DPCK domain maps to 3–199 (TLGVTGGIGS…ELYWAVTGGQ (197 aa)). 11-16 (GSGKTT) contacts ATP.

The protein belongs to the CoaE family.

The protein resides in the cytoplasm. It carries out the reaction 3'-dephospho-CoA + ATP = ADP + CoA + H(+). Its pathway is cofactor biosynthesis; coenzyme A biosynthesis; CoA from (R)-pantothenate: step 5/5. Its function is as follows. Catalyzes the phosphorylation of the 3'-hydroxyl group of dephosphocoenzyme A to form coenzyme A. In Salinibacter ruber (strain DSM 13855 / M31), this protein is Dephospho-CoA kinase.